The following is a 142-amino-acid chain: FAD synthase (142 aa).

ATP is bound by residues 9 to 10 (TF), 14 to 17 (HPGH), D92, and Y119.

The protein belongs to the archaeal FAD synthase family. Homodimer. Requires a divalent metal cation as cofactor.

It catalyses the reaction FMN + ATP + H(+) = FAD + diphosphate. Its pathway is cofactor biosynthesis; FAD biosynthesis; FAD from FMN: step 1/1. Its function is as follows. Catalyzes the transfer of the AMP portion of ATP to flavin mononucleotide (FMN) to produce flavin adenine dinucleotide (FAD) coenzyme. The chain is FAD synthase from Halorhabdus utahensis (strain DSM 12940 / JCM 11049 / AX-2).